Here is a 519-residue protein sequence, read N- to C-terminus: Glutamate--cysteine ligase (519 aa).

Belongs to the glutamate--cysteine ligase type 1 family. Type 1 subfamily.

It catalyses the reaction L-cysteine + L-glutamate + ATP = gamma-L-glutamyl-L-cysteine + ADP + phosphate + H(+). The protein operates within sulfur metabolism; glutathione biosynthesis; glutathione from L-cysteine and L-glutamate: step 1/2. The protein is Glutamate--cysteine ligase of Erwinia tasmaniensis (strain DSM 17950 / CFBP 7177 / CIP 109463 / NCPPB 4357 / Et1/99).